Here is a 206-residue protein sequence, read N- to C-terminus: Dephospho-CoA kinase (206 aa).

The DPCK domain occupies 4 to 204 (VIGLTGGIAS…EGYIESHSED (201 aa)). 12–17 (ASGKST) contributes to the ATP binding site.

It belongs to the CoaE family.

The protein localises to the cytoplasm. It catalyses the reaction 3'-dephospho-CoA + ATP = ADP + CoA + H(+). It participates in cofactor biosynthesis; coenzyme A biosynthesis; CoA from (R)-pantothenate: step 5/5. Its function is as follows. Catalyzes the phosphorylation of the 3'-hydroxyl group of dephosphocoenzyme A to form coenzyme A. This Staphylococcus saprophyticus subsp. saprophyticus (strain ATCC 15305 / DSM 20229 / NCIMB 8711 / NCTC 7292 / S-41) protein is Dephospho-CoA kinase.